The primary structure comprises 880 residues: Alanine--tRNA ligase (880 aa).

4 residues coordinate Zn(2+): H567, H571, C669, and H673.

It belongs to the class-II aminoacyl-tRNA synthetase family. Zn(2+) serves as cofactor.

It localises to the cytoplasm. The enzyme catalyses tRNA(Ala) + L-alanine + ATP = L-alanyl-tRNA(Ala) + AMP + diphosphate. Functionally, catalyzes the attachment of alanine to tRNA(Ala) in a two-step reaction: alanine is first activated by ATP to form Ala-AMP and then transferred to the acceptor end of tRNA(Ala). Also edits incorrectly charged Ser-tRNA(Ala) and Gly-tRNA(Ala) via its editing domain. This chain is Alanine--tRNA ligase, found in Bacillus anthracis.